Reading from the N-terminus, the 99-residue chain is MATYQVRLINKKRNLDITLPVDEDTTVLEAAEEAELDLPFSCHSGACSSCVGKVVEGEINQDDQTFLDEEQVAKGFVLLCVTYPRTDCTIRTHQEAYLV.

Residues 4 to 96 (YQVRLINKKR…DCTIRTHQEA (93 aa)) enclose the 2Fe-2S ferredoxin-type domain. 4 residues coordinate [2Fe-2S] cluster: Cys-42, Cys-47, Cys-50, and Cys-80.

The protein belongs to the 2Fe2S plant-type ferredoxin family. Requires [2Fe-2S] cluster as cofactor.

Its function is as follows. Ferredoxins are iron-sulfur proteins that transfer electrons in a wide variety of metabolic reactions. Donates electrons to the nitrogenase. The chain is Ferredoxin-2 (fdxH) from Leptolyngbya boryana (Plectonema boryanum).